The chain runs to 479 residues: Catalase A (479 aa).

Over residues 1-21 (MSKILTTASGAPVADNQNSRS) the composition is skewed to polar residues. The interval 1-25 (MSKILTTASGAPVADNQNSRSAGPR) is disordered. Catalysis depends on residues His53 and Asn126. Residue Tyr336 coordinates heme. Positions 350–376 (QLPVNAPRCPVNSYQRDGSMATGSYGS) are disordered. The segment covering 361–376 (NSYQRDGSMATGSYGS) has biased composition (polar residues).

This sequence belongs to the catalase family. The cofactor is heme.

The enzyme catalyses 2 H2O2 = O2 + 2 H2O. With respect to regulation, activated by peroxide. Functionally, the major expressed catalase protein in strain Corvallis in stationary phase. Decomposes hydrogen peroxide into water and oxygen; serves to protect cells from the toxic effects of hydrogen peroxide. This is Catalase A (katA) from Pseudomonas putida (Arthrobacter siderocapsulatus).